The chain runs to 608 residues: Phosphomethylpyrimidine synthase (608 aa).

Residues asparagine 216, methionine 245, tyrosine 274, histidine 310, 330–332 (SRG), 371–374 (DGLR), and glutamate 410 each bind substrate. Position 414 (histidine 414) interacts with Zn(2+). Tyrosine 437 lines the substrate pocket. Histidine 478 is a binding site for Zn(2+). [4Fe-4S] cluster is bound by residues cysteine 558, cysteine 561, and cysteine 566.

This sequence belongs to the ThiC family. Homodimer. [4Fe-4S] cluster serves as cofactor.

The enzyme catalyses 5-amino-1-(5-phospho-beta-D-ribosyl)imidazole + S-adenosyl-L-methionine = 4-amino-2-methyl-5-(phosphooxymethyl)pyrimidine + CO + 5'-deoxyadenosine + formate + L-methionine + 3 H(+). Its pathway is cofactor biosynthesis; thiamine diphosphate biosynthesis. Functionally, catalyzes the synthesis of the hydroxymethylpyrimidine phosphate (HMP-P) moiety of thiamine from aminoimidazole ribotide (AIR) in a radical S-adenosyl-L-methionine (SAM)-dependent reaction. This chain is Phosphomethylpyrimidine synthase, found in Ruegeria sp. (strain TM1040) (Silicibacter sp.).